The chain runs to 131 residues: MEEAGLCGLRRKADMLCNSESHDILQHQDSNCSATSNKHLLEDEEGSDFITKNRSWVSPVHCTQESRKELPEQEVAPPSGQQALQCNRNKEKVLGKEVLLLMQALNTLLTPEEKLAAVCKKYADLGNSPLL.

Belongs to the taxilin family.

The sequence is that of Putative gamma-taxilin 2 (TXLNGY) from Pan troglodytes (Chimpanzee).